The chain runs to 130 residues: Large ribosomal subunit protein bL20 (130 aa).

It belongs to the bacterial ribosomal protein bL20 family.

Binds directly to 23S ribosomal RNA and is necessary for the in vitro assembly process of the 50S ribosomal subunit. It is not involved in the protein synthesizing functions of that subunit. The chain is Large ribosomal subunit protein bL20 from Salinispora arenicola (strain CNS-205).